The sequence spans 177 residues: Large ribosomal subunit protein uL6 (177 aa).

Belongs to the universal ribosomal protein uL6 family. In terms of assembly, part of the 50S ribosomal subunit.

Its function is as follows. This protein binds to the 23S rRNA, and is important in its secondary structure. It is located near the subunit interface in the base of the L7/L12 stalk, and near the tRNA binding site of the peptidyltransferase center. The sequence is that of Large ribosomal subunit protein uL6 from Rubrobacter xylanophilus (strain DSM 9941 / JCM 11954 / NBRC 16129 / PRD-1).